Here is a 343-residue protein sequence, read N- to C-terminus: Dipeptide transport system permease protein DppC (343 aa).

5 helical membrane passes run 44-64, 144-164, 195-215, 259-279, and 309-329; these read LVAM…AFVV, LIIA…YGII, LALL…LFAW, GVIV…EAVL, and FQLI…IFFG. The ABC transmembrane type-1 domain occupies 140-329; the sequence is LRISLIIALA…VLSLTFIFFG (190 aa).

The protein belongs to the binding-protein-dependent transport system permease family. OppBC subfamily. In terms of assembly, the complex is composed of two ATP-binding proteins (DppD and DppF), two transmembrane proteins (DppB and DppC) and a solute-binding protein (DppA).

It is found in the cell membrane. In terms of biological role, part of the ABC transporter DppABCDF involved in dipeptide transport. Responsible for the translocation of the substrate across the membrane. This Lactococcus lactis subsp. cremoris (strain MG1363) protein is Dipeptide transport system permease protein DppC.